A 1555-amino-acid polypeptide reads, in one-letter code: Glycogen debranching enzyme (1555 aa).

The residue at position 87 (Ser87) is a Phosphoserine. Active-site residues include Asp549, His552, and Asp650.

Belongs to the glycogen debranching enzyme family. As to quaternary structure, monomer. Interacts with NHLRC1/malin. Post-translationally, the N-terminus is blocked. In terms of processing, ubiquitinated.

The protein localises to the cytoplasm. The catalysed reaction is Transfers a segment of a (1-&gt;4)-alpha-D-glucan to a new position in an acceptor, which may be glucose or a (1-&gt;4)-alpha-D-glucan.. The enzyme catalyses Hydrolysis of (1-&gt;6)-alpha-D-glucosidic branch linkages in glycogen phosphorylase limit dextrin.. Multifunctional enzyme acting as 1,4-alpha-D-glucan:1,4-alpha-D-glucan 4-alpha-D-glycosyltransferase and amylo-1,6-glucosidase in glycogen degradation. The chain is Glycogen debranching enzyme (AGL) from Oryctolagus cuniculus (Rabbit).